Here is a 306-residue protein sequence, read N- to C-terminus: Bifunctional protein FolD 2 (306 aa).

NADP(+)-binding positions include 169–171 and isoleucine 235; that span reads GHS.

It belongs to the tetrahydrofolate dehydrogenase/cyclohydrolase family. As to quaternary structure, homodimer.

The catalysed reaction is (6R)-5,10-methylene-5,6,7,8-tetrahydrofolate + NADP(+) = (6R)-5,10-methenyltetrahydrofolate + NADPH. It catalyses the reaction (6R)-5,10-methenyltetrahydrofolate + H2O = (6R)-10-formyltetrahydrofolate + H(+). It functions in the pathway one-carbon metabolism; tetrahydrofolate interconversion. In terms of biological role, catalyzes the oxidation of 5,10-methylenetetrahydrofolate to 5,10-methenyltetrahydrofolate and then the hydrolysis of 5,10-methenyltetrahydrofolate to 10-formyltetrahydrofolate. The sequence is that of Bifunctional protein FolD 2 from Mesorhizobium japonicum (strain LMG 29417 / CECT 9101 / MAFF 303099) (Mesorhizobium loti (strain MAFF 303099)).